The chain runs to 646 residues: Cell surface glycoprotein MUC18 (646 aa).

The first 23 residues, 1-23 (MGLPRLVCAFLLAACCCCPRVAG), serve as a signal peptide directing secretion. 2 consecutive Ig-like V-type domains span residues 24–129 (VPGE…YRIQ) and 139–242 (PNIQ…REVT). The Extracellular portion of the chain corresponds to 24–559 (VPGEAEQPAP…RKLPEPESRG (536 aa)). 4 disulfide bridges follow: cysteine 48-cysteine 116, cysteine 161-cysteine 223, cysteine 272-cysteine 320, and cysteine 365-cysteine 407. Asparagine 56 carries an N-linked (GlcNAc...) asparagine glycan. Ig-like C2-type domains follow at residues 244-330 (PVFY…TMIS), 335-424 (PQEL…QLVN), and 430-510 (PPWM…KNTS). The disordered stretch occupies residues 278–299 (PPPHFSISKQNPSTREAEEETT). N-linked (GlcNAc...) asparagine glycosylation is found at asparagine 418, asparagine 449, asparagine 467, asparagine 508, asparagine 518, asparagine 527, and asparagine 544. A disulfide bridge links cysteine 452 with cysteine 499. Residues 525 to 554 (DSNTTTGLSTSTASPHTRANSTSTERKLPE) are disordered. Polar residues predominate over residues 533–547 (STSTASPHTRANSTS). Residues 560 to 583 (VVIVAVIVCILVLAVLGAVLYFLY) traverse the membrane as a helical segment. Topologically, residues 584-646 (KKGKLPCRRS…QGEKYIDLRH (63 aa)) are cytoplasmic. Residues serine 606, serine 614, and serine 628 each carry the phosphoserine modification. Residues 620-646 (EMGLLQGSSGDKRAPGDQGEKYIDLRH) are disordered. Residues 629–646 (GDKRAPGDQGEKYIDLRH) are compositionally biased toward basic and acidic residues.

In terms of tissue distribution, detected in endothelial cells in vascular tissue throughout the body. May appear at the surface of neural crest cells during their embryonic migration. Appears to be limited to vascular smooth muscle in normal adult tissues. Associated with tumor progression and the development of metastasis in human malignant melanoma. Expressed most strongly on metastatic lesions and advanced primary tumors and is only rarely detected in benign melanocytic nevi and thin primary melanomas with a low probability of metastasis.

It is found in the membrane. Its function is as follows. Plays a role in cell adhesion, and in cohesion of the endothelial monolayer at intercellular junctions in vascular tissue. Its expression may allow melanoma cells to interact with cellular elements of the vascular system, thereby enhancing hematogeneous tumor spread. Could be an adhesion molecule active in neural crest cells during embryonic development. Acts as a surface receptor that triggers tyrosine phosphorylation of FYN and PTK2/FAK1, and a transient increase in the intracellular calcium concentration. The protein is Cell surface glycoprotein MUC18 (MCAM) of Homo sapiens (Human).